Reading from the N-terminus, the 635-residue chain is Protein OPG056 (635 aa).

This sequence belongs to the orthopoxvirus OPG056 family. As to quaternary structure, interacts with protein OPG164/A36. Interacts with protein OPG064/E2.

The protein localises to the virion membrane. The protein resides in the host endosome. Its function is as follows. Plays a role in intracellular enveloped virus (IEV) transport to the cell surface through microtubule transport. Together with protein OPG064/E2, forms a complex that interacts with host KLC2 (kinesin light chain isoform 2) to engage the kinesin-1 complex and thereby promote IEV trafficking. The chain is Protein OPG056 (OPG056) from Vaccinia virus (strain Western Reserve) (VACV).